The chain runs to 509 residues: Cytochrome P450 6A1 (509 aa).

Cys449 is a heme binding site.

Belongs to the cytochrome P450 family. The cofactor is heme.

It is found in the endoplasmic reticulum membrane. Its subcellular location is the microsome membrane. The catalysed reaction is an organic molecule + reduced [NADPH--hemoprotein reductase] + O2 = an alcohol + oxidized [NADPH--hemoprotein reductase] + H2O + H(+). Functionally, involved in the metabolism of insect hormones and in the breakdown of synthetic insecticides. In Musca domestica (House fly), this protein is Cytochrome P450 6A1 (CYP6A1).